The primary structure comprises 293 residues: Ribosomal RNA small subunit methyltransferase A (293 aa).

Residues Asn29, Leu31, Gly56, Glu77, Asp102, and Asn127 each coordinate S-adenosyl-L-methionine.

This sequence belongs to the class I-like SAM-binding methyltransferase superfamily. rRNA adenine N(6)-methyltransferase family. RsmA subfamily.

The protein localises to the cytoplasm. It carries out the reaction adenosine(1518)/adenosine(1519) in 16S rRNA + 4 S-adenosyl-L-methionine = N(6)-dimethyladenosine(1518)/N(6)-dimethyladenosine(1519) in 16S rRNA + 4 S-adenosyl-L-homocysteine + 4 H(+). In terms of biological role, specifically dimethylates two adjacent adenosines (A1518 and A1519) in the loop of a conserved hairpin near the 3'-end of 16S rRNA in the 30S particle. May play a critical role in biogenesis of 30S subunits. In Geobacillus kaustophilus (strain HTA426), this protein is Ribosomal RNA small subunit methyltransferase A.